The following is a 563-amino-acid chain: Alpha-keto-acid decarboxylase (563 aa).

Residue Glu-59 participates in thiamine diphosphate binding. Residues 347–367 (SSPPVASPPAEPLPPPPPREQ) form a disordered region. Pro residues predominate over residues 351–366 (VASPPAEPLPPPPPRE). The thiamine pyrophosphate binding stretch occupies residues 394–476 (TSFYGMADHR…VVVNNDGYTV (83 aa)). Mg(2+) contacts are provided by Asp-444, Asn-471, and Gly-473.

Belongs to the TPP enzyme family. A metal cation is required as a cofactor. It depends on thiamine diphosphate as a cofactor.

In terms of biological role, decarboxylates branched-chain and aromatic alpha-keto acids to aldehydes. This Mycolicibacterium paratuberculosis (strain ATCC BAA-968 / K-10) (Mycobacterium paratuberculosis) protein is Alpha-keto-acid decarboxylase (kdc).